We begin with the raw amino-acid sequence, 219 residues long: Elongation factor Ts (219 aa).

The interval 83–86 is involved in Mg(2+) ion dislocation from EF-Tu; that stretch reads TDFV.

The protein belongs to the EF-Ts family.

Its subcellular location is the cytoplasm. Functionally, associates with the EF-Tu.GDP complex and induces the exchange of GDP to GTP. It remains bound to the aminoacyl-tRNA.EF-Tu.GTP complex up to the GTP hydrolysis stage on the ribosome. In Synechococcus sp. (strain WH7803), this protein is Elongation factor Ts.